A 567-amino-acid polypeptide reads, in one-letter code: Ribulokinase (567 aa).

The protein belongs to the ribulokinase family.

It carries out the reaction D-ribulose + ATP = D-ribulose 5-phosphate + ADP + H(+). It catalyses the reaction L-ribulose + ATP = L-ribulose 5-phosphate + ADP + H(+). It functions in the pathway carbohydrate degradation; L-arabinose degradation via L-ribulose; D-xylulose 5-phosphate from L-arabinose (bacterial route): step 2/3. The sequence is that of Ribulokinase from Vibrio parahaemolyticus serotype O3:K6 (strain RIMD 2210633).